We begin with the raw amino-acid sequence, 110 residues long: METIAKHRYARTSAQKARLVADLIRGKKVAQALEILTFTNKKAAALVKKVLESAIANAEHNDGADIDDLKVAKIFVDEGPSMKRVMPRAKGRADRILKRTSHITVVVSDR.

It belongs to the universal ribosomal protein uL22 family. As to quaternary structure, part of the 50S ribosomal subunit.

Its function is as follows. This protein binds specifically to 23S rRNA; its binding is stimulated by other ribosomal proteins, e.g. L4, L17, and L20. It is important during the early stages of 50S assembly. It makes multiple contacts with different domains of the 23S rRNA in the assembled 50S subunit and ribosome. Functionally, the globular domain of the protein is located near the polypeptide exit tunnel on the outside of the subunit, while an extended beta-hairpin is found that lines the wall of the exit tunnel in the center of the 70S ribosome. This chain is Large ribosomal subunit protein uL22, found in Haemophilus influenzae (strain 86-028NP).